Here is a 224-residue protein sequence, read N- to C-terminus: Thymidine kinase, cytosolic (224 aa).

The residue at position 13 (S13) is a Phosphoserine. Residues 26–33, 58–60, and 98–101 contribute to the ATP site; these read GPMFSGKS, DTR, and DEGQ. E99 (proton acceptor) is an active-site residue. F129 provides a ligand contact to substrate. C154 and C157 together coordinate Zn(2+). Residues 173-177 and Y182 contribute to the substrate site; that span reads VEVIG. Zn(2+) is bound by residues C186 and C189. The KEN box signature appears at 203-205; the sequence is KEN.

This sequence belongs to the thymidine kinase family. Homotetramer. Tetramerization from dimerization is induced by ATP and increases catalytic efficiency due to a high affinity for thymidine. Tetramerization is inhibited by phosphorylation at Ser-13. Interacts (via the KEN box) with FZR1. In terms of processing, phosphorylated on Ser-13 in mitosis. Phosphorylation of Ser-13 by CDK1 during mitosis reduces homotetramerization and catalytic efficiency when DNA replication is complete and intracellular TK1 is still present at a high level. Polyubiquitinated. Postmitosis, ubiquitination leads to proteasomal degradation. The KEN box sequence located at the C-terminal region targets for degradation by the anaphase promoting complex (APC/C) activated and rate-limited by FZR1.

The protein resides in the cytoplasm. It carries out the reaction thymidine + ATP = dTMP + ADP + H(+). Cell-cycle-regulated enzyme of importance in nucleotide metabolism. Catalyzes the first enzymatic step in the salvage pathway converting thymidine into thymidine monophosphate. Transcriptional regulation limits expression to the S phase of the cell cycle and transient expression coincides with the oscillation in the intracellular dTTP concentration. The chain is Thymidine kinase, cytosolic (TK1) from Gallus gallus (Chicken).